The primary structure comprises 1212 residues: uncharacterized protein (1212 aa).

The interval 783–802 (TRQDASGGSSSGTKKGEKLQ) is disordered.

This is an uncharacterized protein from Human herpesvirus 6B (strain Z29) (HHV-6 variant B).